We begin with the raw amino-acid sequence, 62 residues long: Large ribosomal subunit protein bL33 (62 aa).

The protein belongs to the bacterial ribosomal protein bL33 family.

This is Large ribosomal subunit protein bL33 from Cyanothece sp. (strain PCC 7425 / ATCC 29141).